The primary structure comprises 379 residues: Retinoic acid receptor RXR-alpha-B (379 aa).

Residues 1–22 show a composition bias toward polar residues; it reads MPVPEQKQTVQLSSPMNAVSSS. The interval 1-24 is disordered; that stretch reads MPVPEQKQTVQLSSPMNAVSSSED. The interval 1–53 is modulating; sequence MPVPEQKQTVQLSSPMNAVSSSEDIKPPLGLNGVMKVPAHRIGTLSLSLTKHI. Positions 51-126 form a DNA-binding region, nuclear receptor; that stretch reads KHICAICGDR…MGMKREAVQE (76 aa). Cys54, Cys57, Cys71, and Cys74 together coordinate Zn(2+). The NR C4-type zinc finger occupies 54–74; the sequence is CAICGDRSSGKHYGVYSCEGC. The segment at 79–84 is nuclear localization signal; that stretch reads KRTVRK. Zn(2+) is bound by residues Cys90, Cys96, Cys106, and Cys109. The NR C4-type zinc-finger motif lies at 90 to 109; it reads CRDNKDCMIDKRQRNRCQYC. A hinge region spans residues 120-141; it reads KREAVQEERQRAKERSEAEFGG. Residues 144–375 enclose the NR LBD domain; it reads NEDMPVEKIL…TFLMEMLEAP (232 aa). 9-cis-retinoate-binding residues include Arg233 and Ala244. All-trans-retinoate-binding residues include Arg233 and Ala244. Positions 265 to 285 are required for nuclear export; the sequence is RVLTELVSKMRDMQMDKTELG. The segment at 364–375 is AF-2; that stretch reads IDTFLMEMLEAP.

This sequence belongs to the nuclear hormone receptor family. NR2 subfamily. As to quaternary structure, homodimer. Heterodimer; with a rar molecule. Binds DNA preferentially as a rar/rxr heterodimer. Uniform expression from the blastula to mid-gastrula stages. At 12 hours post-fertilization (hpf), expressed strongly in the tail and weakly elsewhere. At 24 hpf, weak expression in the forebrain, eyes and pharyngeal endoderm and continued expression in the tail mesoderm. At 48 hpf, anterior expression limited to ventral cells underlying the head, medial expression in the pectoral fin bud mesoderm and continued tail expression.

The protein resides in the nucleus. In terms of biological role, receptor for retinoic acid that acts as a transcription factor. Forms homo- or heterodimers with retinoic acid receptors (rars) and binds to target response elements in response to their ligands, all-trans or 9-cis retinoic acid, to regulate gene expression in various biological processes. The rar/rxr heterodimers bind to the retinoic acid response elements (RARE) composed of tandem 5'-AGGTCA-3' sites known as DR1-DR5 to regulate transcription. The high affinity ligand for rxrs is 9-cis retinoic acid. In the absence of ligand, the rar/rxr heterodimers associate with a multiprotein complex containing transcription corepressors that induce histone deacetylation, chromatin condensation and transcriptional suppression. On ligand binding, the corepressors dissociate from the receptors and coactivators are recruited leading to transcriptional activation. In Danio rerio (Zebrafish), this protein is Retinoic acid receptor RXR-alpha-B (rxrab).